Reading from the N-terminus, the 305-residue chain is tRNA dimethylallyltransferase (305 aa).

12–19 (GPTASGKT) provides a ligand contact to ATP. 14-19 (TASGKT) serves as a coordination point for substrate. Interaction with substrate tRNA regions lie at residues 37–40 (DSAL), 161–165 (QRLAR), and 242–247 (RCVGYR).

The protein belongs to the IPP transferase family. In terms of assembly, monomer. It depends on Mg(2+) as a cofactor.

It carries out the reaction adenosine(37) in tRNA + dimethylallyl diphosphate = N(6)-dimethylallyladenosine(37) in tRNA + diphosphate. In terms of biological role, catalyzes the transfer of a dimethylallyl group onto the adenine at position 37 in tRNAs that read codons beginning with uridine, leading to the formation of N6-(dimethylallyl)adenosine (i(6)A). The chain is tRNA dimethylallyltransferase from Psychromonas ingrahamii (strain DSM 17664 / CCUG 51855 / 37).